The following is a 192-amino-acid chain: Visinin (192 aa).

Gly2 carries the N-myristoyl glycine lipid modification. EF-hand domains are found at residues 24–59, 61–96, 97–132, and 146–181; these read TEEE…FFPN, EPQG…TSSG, KTHL…IFKM, and NSPQ…KNDA. Ca(2+)-binding residues include Asp74, Asn76, Asp78, Thr80, Glu85, Asp110, Asp112, Asn114, Glu116, Glu121, Asn164, Lys166, and Glu171.

This sequence belongs to the recoverin family. In terms of tissue distribution, retinal cell specific protein.

Functionally, seems to be implicated in the pathway from retinal rod guanylate cyclase to rhodopsin. May be involved in the blocking of the phosphorylation of rhodopsin. In Gallus gallus (Chicken), this protein is Visinin.